Here is a 392-residue protein sequence, read N- to C-terminus: S-adenosylmethionine synthase (392 aa).

His-17 contacts ATP. Asp-19 serves as a coordination point for Mg(2+). Glu-45 is a binding site for K(+). L-methionine contacts are provided by Glu-58 and Gln-102. A flexible loop region spans residues 102–112 (QSADIAQGVDA). ATP contacts are provided by residues 169 to 171 (DAK), 235 to 236 (KF), Asp-244, 250 to 251 (RK), Ala-267, and Lys-271. Asp-244 provides a ligand contact to L-methionine. Lys-275 lines the L-methionine pocket.

It belongs to the AdoMet synthase family. In terms of assembly, homotetramer; dimer of dimers. It depends on Mg(2+) as a cofactor. Requires K(+) as cofactor.

The protein resides in the cytoplasm. The catalysed reaction is L-methionine + ATP + H2O = S-adenosyl-L-methionine + phosphate + diphosphate. It participates in amino-acid biosynthesis; S-adenosyl-L-methionine biosynthesis; S-adenosyl-L-methionine from L-methionine: step 1/1. Its function is as follows. Catalyzes the formation of S-adenosylmethionine (AdoMet) from methionine and ATP. The overall synthetic reaction is composed of two sequential steps, AdoMet formation and the subsequent tripolyphosphate hydrolysis which occurs prior to release of AdoMet from the enzyme. The chain is S-adenosylmethionine synthase from Methylobacterium sp. (strain 4-46).